A 77-amino-acid polypeptide reads, in one-letter code: Small ribosomal subunit protein bS20 (77 aa).

The protein belongs to the bacterial ribosomal protein bS20 family.

Binds directly to 16S ribosomal RNA. The polypeptide is Small ribosomal subunit protein bS20 (Streptococcus uberis (strain ATCC BAA-854 / 0140J)).